The chain runs to 243 residues: tRNA pseudouridine synthase A (243 aa).

The active-site Nucleophile is the aspartate 53. Tyrosine 111 provides a ligand contact to substrate.

This sequence belongs to the tRNA pseudouridine synthase TruA family. As to quaternary structure, homodimer.

It carries out the reaction uridine(38/39/40) in tRNA = pseudouridine(38/39/40) in tRNA. Formation of pseudouridine at positions 38, 39 and 40 in the anticodon stem and loop of transfer RNAs. This Chlorobium phaeovibrioides (strain DSM 265 / 1930) (Prosthecochloris vibrioformis (strain DSM 265)) protein is tRNA pseudouridine synthase A.